The chain runs to 306 residues: Nucleotide-binding protein amb4396 (306 aa).

The span at 1 to 14 (MSDLHSSPTDQTSA) shows a compositional bias: polar residues. The tract at residues 1–20 (MSDLHSSPTDQTSAPAHAGG) is disordered. ATP is bound at residue 29–36 (GMSGAGKT). GTP is bound at residue 77–80 (DIRT).

The protein belongs to the RapZ-like family.

In terms of biological role, displays ATPase and GTPase activities. The polypeptide is Nucleotide-binding protein amb4396 (Paramagnetospirillum magneticum (strain ATCC 700264 / AMB-1) (Magnetospirillum magneticum)).